A 180-amino-acid polypeptide reads, in one-letter code: MRITVSGLPGSGTTTVSKLLAEYYELELISSGEIFRRIAREKEMSLAEFGAMAEKDPSIDLAIDKNQREVIHSHEKLILESRLAGHMAKEVPNVLKIWIKAPLPVRVKRILRREKSVSFDEELERTVEREKSEALRYMNYYNIDIDDLSIYDIVIDSEKWNQYQILDILKVAIDSLVGPE.

7 to 15 contacts ATP; sequence GLPGSGTTT.

It belongs to the cytidylate kinase family. Type 2 subfamily.

It is found in the cytoplasm. It catalyses the reaction CMP + ATP = CDP + ADP. The enzyme catalyses dCMP + ATP = dCDP + ADP. The polypeptide is Cytidylate kinase (Methanosarcina barkeri (strain Fusaro / DSM 804)).